A 372-amino-acid chain; its full sequence is Galanin receptor type 2 (372 aa).

The Extracellular portion of the chain corresponds to 1–28 (MNGSGSQGAENTSQEGGSGGWQPEAVLV). N-linked (GlcNAc...) asparagine glycans are attached at residues asparagine 2 and asparagine 11. Residues 29–49 (PLFFALIFLVGTVGNALVLAV) traverse the membrane as a helical segment. The Cytoplasmic portion of the chain corresponds to 50 to 60 (LLRGGQAVSTT). A helical membrane pass occupies residues 61 to 81 (NLFILNLGVADLCFILCCVPF). Topologically, residues 82–99 (QATIYTLDDWVFGSLLCK) are extracellular. Cysteine 98 and cysteine 175 form a disulfide bridge. The helical transmembrane segment at 100 to 121 (AVHFLIFLTMHASSFTLAAVSL) threads the bilayer. The Cytoplasmic segment spans residues 122–141 (DRYLAIRYPLHSRELRTPRN). The helical transmembrane segment at 142–162 (ALAAIGLIWGLALLFSGPYLS) threads the bilayer. Residues 163 to 187 (YYRQSQLANLTVCHPAWSAPRRRAM) lie on the Extracellular side of the membrane. Residues 188–208 (DLCTFVFSYLLPVLVLSLTYA) traverse the membrane as a helical segment. Topologically, residues 209-237 (RTLRYLWRTVDPVTAGSGSQRAKRKVTRM) are cytoplasmic. A helical membrane pass occupies residues 238 to 258 (IIIVAVLFCLCWMPHHALILC). Over 259-260 (VW) the chain is Extracellular. The helical transmembrane segment at 261–281 (FGRFPLTRATYALRILSHLVS) threads the bilayer. Residues 282 to 372 (YANSCVNPIV…ASSRTLDPAC (91 aa)) are Cytoplasmic-facing. The tract at residues 353-372 (VPPPALPNCTASSRTLDPAC) is disordered. Positions 361-372 (CTASSRTLDPAC) are enriched in polar residues.

It belongs to the G-protein coupled receptor 1 family.

Its subcellular location is the cell membrane. In terms of biological role, receptor for the hormone galanin, GALP and spexin-1. The activity of this receptor is mediated by G proteins that activate the phospholipase C/protein kinase C pathway (via G(q)) and that inhibit adenylyl cyclase (via G(i)). The chain is Galanin receptor type 2 (Galr2) from Rattus norvegicus (Rat).